A 166-amino-acid polypeptide reads, in one-letter code: NAD(P)H-quinone oxidoreductase subunit I, chloroplastic (166 aa).

2 4Fe-4S ferredoxin-type domains span residues 55-84 (GRIHFEFDKCIACEVCVRVCPIDLPVVDWQ) and 95-124 (VNYSIDFGICIFCGNCVEYCPTNCLSMTEE). Cys-64, Cys-67, Cys-70, Cys-74, Cys-104, Cys-107, Cys-110, and Cys-114 together coordinate [4Fe-4S] cluster.

Belongs to the complex I 23 kDa subunit family. As to quaternary structure, NDH is composed of at least 16 different subunits, 5 of which are encoded in the nucleus. Requires [4Fe-4S] cluster as cofactor.

Its subcellular location is the plastid. It is found in the chloroplast thylakoid membrane. The catalysed reaction is a plastoquinone + NADH + (n+1) H(+)(in) = a plastoquinol + NAD(+) + n H(+)(out). The enzyme catalyses a plastoquinone + NADPH + (n+1) H(+)(in) = a plastoquinol + NADP(+) + n H(+)(out). Its function is as follows. NDH shuttles electrons from NAD(P)H:plastoquinone, via FMN and iron-sulfur (Fe-S) centers, to quinones in the photosynthetic chain and possibly in a chloroplast respiratory chain. The immediate electron acceptor for the enzyme in this species is believed to be plastoquinone. Couples the redox reaction to proton translocation, and thus conserves the redox energy in a proton gradient. In Coreopsis petrophiloides (Tickseed), this protein is NAD(P)H-quinone oxidoreductase subunit I, chloroplastic.